The following is a 152-amino-acid chain: 1,4-dihydroxy-2-naphthoyl-CoA hydrolase (152 aa).

The active site involves Asp-20.

Belongs to the 4-hydroxybenzoyl-CoA thioesterase family. DHNA-CoA hydrolase subfamily.

It carries out the reaction 1,4-dihydroxy-2-naphthoyl-CoA + H2O = 1,4-dihydroxy-2-naphthoate + CoA + H(+). It participates in cofactor biosynthesis; phylloquinone biosynthesis. The protein operates within quinol/quinone metabolism; 1,4-dihydroxy-2-naphthoate biosynthesis; 1,4-dihydroxy-2-naphthoate from chorismate: step 7/7. Functionally, catalyzes the hydrolysis of 1,4-dihydroxy-2-naphthoyl-CoA (DHNA-CoA) to 1,4-dihydroxy-2-naphthoate (DHNA), a reaction involved in phylloquinone (vitamin K1) biosynthesis. The chain is 1,4-dihydroxy-2-naphthoyl-CoA hydrolase from Synechococcus sp. (strain CC9311).